The chain runs to 423 residues: MLWRNEITEFMDQLSKYSQEILKTFKQLRPSEYKQYNEFLTQVTPLLQKTPEKIPEEVDHIFDYLDNVEKICELLVHASSIIISSKIREQVKHGMSFSYKTDLDSLAGILSQKQYVLIHLSKNIAAHYFNTCLNQGKSRLDLKAASVFYNSRPRTASSAELYRKMLYAYGSLQEINYYTEKARNKTLDVEESDSMATIERTARHNLSLMHPLEAMGLTFGATNTDADPEDLKDKTVINLTLPQATESVTYHLNSLMQLKKVSTTSGLNTNILKAFDNIISTPVKKNKMASKLAPGMDVVFTSDNGKTFFTKNVLSKNMLAGPKERVFAYNNLISNLNNSCFIQNHNDFLRQQDSWPFYDAHNFTNKFLMQPIFSGQTRPRLQGAMEAAHVETHLTAFLQSIQPSRPQDPSILASPKLSALILN.

It belongs to the asfivirus E423R family.

Its subcellular location is the virion. This is an uncharacterized protein from African swine fever virus (isolate Pig/Kenya/KEN-50/1950) (ASFV).